We begin with the raw amino-acid sequence, 304 residues long: Acetyl-coenzyme A carboxylase carboxyl transferase subunit beta (304 aa).

Residues 25 to 294 enclose the CoA carboxyltransferase N-terminal domain; it reads VWTKCDSCGQ…PSVVESKADT (270 aa). 4 residues coordinate Zn(2+): cysteine 29, cysteine 32, cysteine 48, and cysteine 51. The segment at 29 to 51 adopts a C4-type zinc-finger fold; that stretch reads CDSCGQVLYRAELERNLEVCPKC.

It belongs to the AccD/PCCB family. In terms of assembly, acetyl-CoA carboxylase is a heterohexamer composed of biotin carboxyl carrier protein (AccB), biotin carboxylase (AccC) and two subunits each of ACCase subunit alpha (AccA) and ACCase subunit beta (AccD). It depends on Zn(2+) as a cofactor.

The protein localises to the cytoplasm. It carries out the reaction N(6)-carboxybiotinyl-L-lysyl-[protein] + acetyl-CoA = N(6)-biotinyl-L-lysyl-[protein] + malonyl-CoA. Its pathway is lipid metabolism; malonyl-CoA biosynthesis; malonyl-CoA from acetyl-CoA: step 1/1. Component of the acetyl coenzyme A carboxylase (ACC) complex. Biotin carboxylase (BC) catalyzes the carboxylation of biotin on its carrier protein (BCCP) and then the CO(2) group is transferred by the transcarboxylase to acetyl-CoA to form malonyl-CoA. The protein is Acetyl-coenzyme A carboxylase carboxyl transferase subunit beta of Yersinia pestis (strain Pestoides F).